The primary structure comprises 241 residues: Probable 2-phosphosulfolactate phosphatase (241 aa).

It belongs to the ComB family. The cofactor is Mg(2+).

The enzyme catalyses (2R)-O-phospho-3-sulfolactate + H2O = (2R)-3-sulfolactate + phosphate. This chain is Probable 2-phosphosulfolactate phosphatase, found in Microcystis aeruginosa (strain NIES-843 / IAM M-2473).